The primary structure comprises 649 residues: MASNMDREMILADFQACTGIENIDEAITLLEQNNWDLVAAINGVIPQENGILQSDFGGETMPGPTFDPASHPAPASTPSSSAFRPVMPSRQIVERQPRMLDFRVEYRDRNVDVVLEDSCTVGEIKQILENELQIPVPKMLLKGWKTGDVEDSTVLKSLHLPKNNSLYVLTPDLPPPSSSSHAGALQESLNQNFMLIITHREVQREYNLNFSGSSTVQEVKRNVYDLTSIPVRHQLWEGWPASATDDSMCLAESGLSYPCHRLTVGRRTSPVQTREQSEEQSTDVHMVSDSDGDDFEDASEFGVDDGEVFGMASSTLRKSPMMPENAENEGDALLQFTAEFSSRYGDCHPVFFIGSLEAAFQEAFYVKARDRKLLAIYLHHDESVLTNVFCSQMLCAESIVSYLSQNFITWAWDLTKDTNRARFLTMCNRHFGSVIAQTIRTQKTDQFPLFLIIMGKRSSNEVLNVIQGNTTVDELMMRLMAAMEIFSAQQQEDIKDEDEREARENVKREQDEAYRLSLEADRAKREAHEREMAEQFRLEQIRKEQEEEREAIRLSLEQALPPEPKEENAEPVSKLRIRTPSGEFLERRFLASNKLQIVFDFVASKGFPWDEFKLLSTFPRRDVTQLDPNKSLLEVNLFPQETLFLQAKE.

Residues 1–57 enclose the UBA domain; that stretch reads MASNMDREMILADFQACTGIENIDEAITLLEQNNWDLVAAINGVIPQENGILQSDFG. Disordered regions lie at residues 56–84 and 266–290; these read FGGE…SAFR and RRTS…VSDS. The span at 68–82 shows a compositional bias: low complexity; the sequence is PASHPAPASTPSSSA. Residue Ser-319 is modified to Phosphoserine. A UBX domain is found at 568-645; sequence NAEPVSKLRI…NLFPQETLFL (78 aa). Thr-579 bears the Phosphothreonine mark. Phosphoserine is present on Ser-581.

In terms of assembly, interacts with CDT1 and ATPase VCP/p97. Interacts (via UBA domain) with FAS (via death domain). Interacts (via UBA domain) with NLRP12 (via DAPIN/PYRIN domain).

It localises to the nucleus. In terms of biological role, ubiquitin-binding protein. Required for the progression of DNA replication forks by targeting DNA replication licensing factor CDT1 for degradation. Potentiates but cannot initiate FAS-induced apoptosis. In Mus musculus (Mouse), this protein is FAS-associated factor 1 (Faf1).